A 1338-amino-acid chain; its full sequence is Thioester-containing protein 1 allele S3 (1338 aa).

An N-terminal signal peptide occupies residues 1–21 (MWQFIRSRILTVIIFIGAAHG). N-linked (GlcNAc...) asparagine glycans are attached at residues asparagine 68, asparagine 199, asparagine 242, asparagine 312, and asparagine 481. The may contain the cleavage site stretch occupies residues 580-609 (ENEFDIFHSLGLFARTLDDILFDSANEKTG). 4 N-linked (GlcNAc...) asparagine glycosylation sites follow: asparagine 637, asparagine 728, asparagine 813, and asparagine 828. A cross-link (isoglutamyl cysteine thioester (Cys-Gln)) is located at residues 859 to 862 (CGEQ). Cystine bridges form between cysteine 1217/cysteine 1283, cysteine 1326/cysteine 1338, and cysteine 1329/cysteine 1334.

In terms of assembly, heterodimer of a TEP1-N chain and an TEP1-C chain non-covalently linked. Forms a complex composed of TEP1-N and TEP1-C heterodimer, LRIM1 and APL1C; the interaction stabilizes TEP1-N and TEP1-C heterodimer, prevents its binding to tissues while circulating in the hemolymph and protects the thioester bond from hydrolysis. Mature TEP1 and to a lesser extent full-length TEP1 interact with SPCLIP1; the interaction is induced by microbial infection. Post-translationally, in the hemolymph, the full-length protein is cleaved by an unknow protease into a 75kDa N-terminal (TEP1-N) chain and an 80kDa C-terminal (TEP1-C) chain which remain non-covalently linked. The TEP1-C chain contains the thioester bond which covalently binds to the pathogen surface. Cleavage is induced by bacterial infection or aseptic wound injury. During embryonic and pupal development, the cleaved form is the predominant form. N-glycosylated.

It localises to the secreted. Its function is as follows. Plays an essential role in the innate immune response against bacteria, fungi and protozoa infection. After proteolytic cleavage, the protein C-terminus binds covalently through a thioester bond to the pathogen surface resulting in pathogen clearance either by melanization or lysis. Initiate the recruitment and activation of a cascade of proteases, mostly of CLIP-domain serine proteases, which leads to the proteolytic cleavage of the prophenoloxidase (PPO) into active phenoloxidase (PO), the rate-limiting enzyme in melanin biosynthesis. In response to parasite P.berghei-mediated infection, binds to and mediates killing of ookinetes, as they egress from midgut epithelial cells into the basal labyrinth, by both lysis and melanization. During bacterial infection, binds to both Gram-positive and Gram-negative bacteria but only promotes phagocytosis of Gram-negative bacteria. Promotes the accumulation of SPCLIP1 onto the surface of P.berghei ookinetes and bacterium E.coli which leads to the melanization of the pathogen. Recruits CLIPA2 to bacteria surface. In response to bacterial infection, required for periostial hemocyte aggregation, but not for the aggregation of sessile hemocytes in non-periostial regions. During the late stage of fungus B.bassiana-mediated infection, required for the initiation of hyphae melanization by binding to the surface of hyphae and recruiting prophenoloxidase PPO to them. Plays a role in male fertility by binding to defective sperm cells and promoting their removal during spermatogenesis. Functionally, binds to and mediates killing of parasite P.bergei ookinetes by lysis. In terms of biological role, binds covalently through a thioester bond to the pathogen surface resulting in pathogen clearance. This chain is Thioester-containing protein 1 allele S3, found in Anopheles gambiae (African malaria mosquito).